A 1600-amino-acid polypeptide reads, in one-letter code: A disintegrin and metalloproteinase with thrombospondin motifs 12 (1600 aa).

The first 25 residues, 1-25 (MPCARGSWLAKLSIVAQLINFGAFC), serve as a signal peptide directing secretion. Residues 26-244 (HGRQTQPWPV…TLRSRSLSRR (219 aa)) constitute a propeptide that is removed on maturation. Asparagine 105 carries an N-linked (GlcNAc...) asparagine glycan. A Cysteine switch motif is present at residues 210–217 (PICGLKDS). Position 212 (cysteine 212) interacts with Zn(2+). Positions 250 to 460 (RWVETLVVAD…GRGFCLDDIP (211 aa)) constitute a Peptidase M12B domain. 11 disulfide bridges follow: cysteine 326/cysteine 380, cysteine 355/cysteine 362, cysteine 374/cysteine 455, cysteine 413/cysteine 439, cysteine 482/cysteine 505, cysteine 493/cysteine 511, cysteine 500/cysteine 530, cysteine 524/cysteine 535, cysteine 558/cysteine 595, cysteine 562/cysteine 600, and cysteine 573/cysteine 585. Histidine 396 is a Zn(2+) binding site. Glutamate 397 is a catalytic residue. Zn(2+)-binding residues include histidine 400 and histidine 406. Residues 469 to 548 (VIAPGVIYDV…GKKPESIPGG (80 aa)) form the Disintegrin domain. TSP type-1 domains lie at 546-601 (PGGW…HPCR), 827-887 (KLLY…KDCP), 891-947 (WAGE…RDIL), and 948-1001 (CPSD…QQCP). A spacer 1 region spans residues 705–831 (CQTVKKLFRQ…DNDVEKLLYF (127 aa)). Positions 1001–1321 (PFSRRVLKPN…HLMKDHSPAY (321 aa)) are spacer 2. Disordered regions lie at residues 1006–1140 (VLKP…LSSS) and 1158–1179 (PEVE…KDKS). Residues 1038–1047 (PTPLSTPTVP) are compositionally biased toward low complexity. Residues 1048 to 1107 (ESMSTSTPTINSLGSTIASQEDANGMGWQNNSTQAEEGSHFPTSSGSTSQVPVTSWSLSI) show a composition bias toward polar residues. The span at 1130 to 1140 (TTTSDSGLSSS) shows a compositional bias: low complexity. 4 consecutive TSP type-1 domains span residues 1318–1371 (SPAY…RPCA), 1373–1428 (WRVG…CNLE), 1429–1477 (PCGE…NRHL), and 1478–1538 (CCHW…QACR). A PLAC domain is found at 1541 to 1581 (ADLTCLKDRLSISFCQTLKSMRKCSVPSVRAQCCLSCPQAP).

As to quaternary structure, interacts with COMP. It depends on Zn(2+) as a cofactor. Post-translationally, the precursor is cleaved by a furin endopeptidase. In terms of processing, subjected to an intracellular maturation process yielding a 120 kDa N-terminal fragment containing the metalloproteinase, disintegrin, one TSP type-1 and the Cys-rich domains and a 83 kDa C-terminal fragment containing the spacer 2 and four TSP type-1 domains. Glycosylated. Can be O-fucosylated by POFUT2 on a serine or a threonine residue found within the consensus sequence C1-X(2)-(S/T)-C2-G of the TSP type-1 repeat domains where C1 and C2 are the first and second cysteine residue of the repeat, respectively. Fucosylated repeats can then be further glycosylated by the addition of a beta-1,3-glucose residue by the glucosyltransferase, B3GALTL. Fucosylation mediates the efficient secretion of ADAMTS family members. Can also be C-glycosylated with one or two mannose molecules on tryptophan residues within the consensus sequence W-X-X-W of the TPRs, and N-glycosylated. These other glycosylations can also facilitate secretion.

Its subcellular location is the secreted. The protein localises to the extracellular space. It localises to the extracellular matrix. Its activity is regulated as follows. Inhibited by alpha-2 macroglobulin. Functionally, metalloprotease that plays a role in the degradation of COMP. Also cleaves alpha-2 macroglobulin and aggregan. Has anti-tumorigenic properties. In Mus musculus (Mouse), this protein is A disintegrin and metalloproteinase with thrombospondin motifs 12 (Adamts12).